We begin with the raw amino-acid sequence, 505 residues long: Protein disulfide-isomerase (505 aa).

An N-terminal signal peptide occupies residues 1–20; sequence MHKAQKFALGLLAAAAVATA. Thioredoxin domains lie at 21–128 and 335–465; these read SDVV…QSLP and FVAG…ENGK. Catalysis depends on nucleophile residues cysteine 50, cysteine 53, cysteine 385, and cysteine 388. Intrachain disulfides connect cysteine 50–cysteine 53 and cysteine 385–cysteine 388. The tract at residues 470 to 505 is disordered; that stretch reads ISEDAEETSSATETTTETATKSEEAAKETATEHDEL. Residues 477 to 488 show a composition bias toward low complexity; it reads TSSATETTTETA. Positions 489 to 505 are enriched in basic and acidic residues; that stretch reads TKSEEAAKETATEHDEL. The Prevents secretion from ER signature appears at 502–505; sequence HDEL.

Belongs to the protein disulfide isomerase family.

It is found in the endoplasmic reticulum lumen. The enzyme catalyses Catalyzes the rearrangement of -S-S- bonds in proteins.. Functionally, participates in the folding of proteins containing disulfide bonds, may be involved in glycosylation, prolyl hydroxylation and triglyceride transfer. This chain is Protein disulfide-isomerase, found in Humicola insolens (Soft-rot fungus).